Consider the following 72-residue polypeptide: Conotoxin LvVIA (72 aa).

The signal sequence occupies residues Val-1 to Ala-17. The propeptide occupies Asp-18–Thr-41. Intrachain disulfides connect Cys-44-Cys-58, Cys-51-Cys-63, and Cys-57-Cys-70.

Belongs to the conotoxin O1 superfamily. Expressed by the venom duct.

It is found in the secreted. In Conus lividus (Livid cone), this protein is Conotoxin LvVIA.